Consider the following 146-residue polypeptide: Inner membrane protein YdgK (146 aa).

The Cytoplasmic portion of the chain corresponds to 1–12; the sequence is MTTTTPQRIGGW. Residues 13 to 33 form a helical membrane-spanning segment; that stretch reads LLGPLAWLLVALLSTTLALLL. Residues 34-59 are Periplasmic-facing; the sequence is YTAALSSPQTFQTLGGQALTTQILWG. A helical transmembrane segment spans residues 60–80; the sequence is VSFITAIALWYYTLWLTIAFF. Residues 81-89 are Cytoplasmic-facing; that stretch reads KRRRCVPKH. Residues 90-110 form a helical membrane-spanning segment; the sequence is YIIWLLISVLLAVKAFAFSPV. Residues 111–112 are Periplasmic-facing; the sequence is ED. The chain crosses the membrane as a helical span at residues 113 to 133; the sequence is GIAVRQLLFTLLATALIVPYF. Residues 134 to 146 are Cytoplasmic-facing; it reads KRSSRVKATFVNP.

It to Synechocystis PCC 6803 sll0481.

The protein localises to the cell inner membrane. The sequence is that of Inner membrane protein YdgK (ydgK) from Escherichia coli (strain K12).